The primary structure comprises 321 residues: Mas-related G-protein coupled receptor member D (321 aa).

At 1 to 33 (MNQTLNSSGTVESALNYSRGSTVHTAYLVLSSL) the chain is on the extracellular side. 3 N-linked (GlcNAc...) asparagine glycosylation sites follow: Asn2, Asn6, and Asn16. The helical transmembrane segment at 34 to 54 (AMFTCLCGMAGNSMVIWLLGF) threads the bilayer. The Cytoplasmic portion of the chain corresponds to 55-59 (RMHRN). A helical transmembrane segment spans residues 60 to 80 (PFCIYILNLAAADLLFLFSMA). The Extracellular portion of the chain corresponds to 81-112 (STLSLETQPLVNTTDKVHELMKRLMYFAYTVG). A glycan (N-linked (GlcNAc...) asparagine) is linked at Asn92. The helical transmembrane segment at 113-133 (LSLLTAISTQRCLSVLFPIWF) threads the bilayer. At 134–142 (KCHRPRHLS) the chain is on the cytoplasmic side. The helical transmembrane segment at 143 to 163 (AWVCGLLWTLCLLMNGLTSSF) threads the bilayer. Residues 164-184 (CSKFLKFNEDRCFRVDMVQAA) are Extracellular-facing. Residues 185 to 205 (LIMGVLTPVMTLSSLTLFVWV) traverse the membrane as a helical segment. At 206–218 (RRSSQQWRRQPTR) the chain is on the cytoplasmic side. Residues 219–239 (LFVVVLASVLVFLICSLPLSI) form a helical membrane-spanning segment. Over 240–257 (YWFVLYWLSLPPEMQVLC) the chain is Extracellular. A helical transmembrane segment spans residues 258-280 (FSLSRLSSSVSSSANPVIYFLVG). Residues 281–321 (SRRSHRLPTRSLGTVLQQALREEPELEGGETPTVGTNEMGA) are Cytoplasmic-facing. The disordered stretch occupies residues 302-321 (EEPELEGGETPTVGTNEMGA).

The protein belongs to the G-protein coupled receptor 1 family. Mas subfamily.

The protein resides in the cell membrane. Functionally, may regulate nociceptor function and/or development, including the sensation or modulation of pain. Functions as a specific membrane receptor for beta-alanine. Beta-alanine at micromolar doses specifically evoked Ca(2+) influx in cells expressing the receptor. Beta-alanine decreases forskolin-stimulated cAMP production in cells expressing the receptor, suggesting that the receptor couples with G-protein G(q) and G(i). In Homo sapiens (Human), this protein is Mas-related G-protein coupled receptor member D (MRGPRD).